The following is a 66-amino-acid chain: Large ribosomal subunit protein bL33 (66 aa).

This sequence belongs to the bacterial ribosomal protein bL33 family.

The polypeptide is Large ribosomal subunit protein bL33 (Wolbachia pipientis wMel).